Reading from the N-terminus, the 408-residue chain is 1-deoxy-D-xylulose 5-phosphate reductoisomerase (408 aa).

Thr-27, Gly-28, Ser-29, Ile-30, Ala-53, Arg-54, Asn-55, and Asn-140 together coordinate NADPH. 1-deoxy-D-xylulose 5-phosphate is bound at residue Lys-141. Glu-142 provides a ligand contact to NADPH. Asp-166 serves as a coordination point for Mn(2+). Residues Ser-167, Glu-168, Ser-192, and His-215 each contribute to the 1-deoxy-D-xylulose 5-phosphate site. Position 168 (Glu-168) interacts with Mn(2+). Residue Gly-221 participates in NADPH binding. 1-deoxy-D-xylulose 5-phosphate contacts are provided by Ser-228, Asn-233, Lys-234, and Glu-237. Residue Glu-237 participates in Mn(2+) binding.

This sequence belongs to the DXR family. Requires Mg(2+) as cofactor. Mn(2+) is required as a cofactor.

The enzyme catalyses 2-C-methyl-D-erythritol 4-phosphate + NADP(+) = 1-deoxy-D-xylulose 5-phosphate + NADPH + H(+). It functions in the pathway isoprenoid biosynthesis; isopentenyl diphosphate biosynthesis via DXP pathway; isopentenyl diphosphate from 1-deoxy-D-xylulose 5-phosphate: step 1/6. Functionally, catalyzes the NADPH-dependent rearrangement and reduction of 1-deoxy-D-xylulose-5-phosphate (DXP) to 2-C-methyl-D-erythritol 4-phosphate (MEP). The polypeptide is 1-deoxy-D-xylulose 5-phosphate reductoisomerase (Nitratidesulfovibrio vulgaris (strain ATCC 29579 / DSM 644 / CCUG 34227 / NCIMB 8303 / VKM B-1760 / Hildenborough) (Desulfovibrio vulgaris)).